A 396-amino-acid polypeptide reads, in one-letter code: S-adenosylmethionine synthase 2 (396 aa).

Glu13 is a binding site for Mg(2+). Residue His19 participates in ATP binding. Glu47 contributes to the K(+) binding site. 2 residues coordinate L-methionine: Glu60 and Gln103. ATP contacts are provided by residues 171–173 (DGK), 239–242 (SGRF), Asp250, 256–257 (RK), Ala273, Lys277, and Lys281. Residue Asp250 participates in L-methionine binding. Position 281 (Lys281) interacts with L-methionine.

It belongs to the AdoMet synthase family. As to quaternary structure, homotetramer. Requires Mn(2+) as cofactor. It depends on Mg(2+) as a cofactor. Co(2+) is required as a cofactor. The cofactor is K(+). In terms of tissue distribution, expressed in roots, stems and leaves (at protein level).

It localises to the cytoplasm. The enzyme catalyses L-methionine + ATP + H2O = S-adenosyl-L-methionine + phosphate + diphosphate. Its pathway is amino-acid biosynthesis; S-adenosyl-L-methionine biosynthesis; S-adenosyl-L-methionine from L-methionine: step 1/1. In terms of biological role, catalyzes the formation of S-adenosylmethionine from methionine and ATP. The reaction comprises two steps that are both catalyzed by the same enzyme: formation of S-adenosylmethionine (AdoMet) and triphosphate, and subsequent hydrolysis of the triphosphate. May be involved in the synthesis of betain in response to abiotic stress such as high salinity. This is S-adenosylmethionine synthase 2 (SAMS2) from Atriplex nummularia (Old man saltbush).